The primary structure comprises 357 residues: GDP-polyphosphate phosphotransferase (357 aa).

Positions 1-83 (MSEEPTVSPP…DSTSASLPAN (83 aa)) are disordered. Residues 14–25 (QPAAQPAKPARP) show a composition bias toward low complexity. The segment covering 26-40 (AARRAPRKPATRRPR) has biased composition (basic residues).

Belongs to the polyphosphate kinase 2 (PPK2) family. Class I subfamily. As to quaternary structure, homotetramer. Also forms octamers. Mg(2+) is required as a cofactor. It depends on Mn(2+) as a cofactor.

It carries out the reaction [phosphate](n) + GTP = [phosphate](n+1) + GDP. The enzyme catalyses [phosphate](n) + ATP = [phosphate](n+1) + ADP. Functionally, uses inorganic polyphosphate (polyP) as a donor to convert GDP to GTP and ADP to ATP. Shows a preference for GDP. Can also catalyze the synthesis of polyP from GTP or ATP, but the rate of polyP utilization is 75-fold greater than the rate of polyP synthesis. The protein is GDP-polyphosphate phosphotransferase of Pseudomonas aeruginosa (strain ATCC 15692 / DSM 22644 / CIP 104116 / JCM 14847 / LMG 12228 / 1C / PRS 101 / PAO1).